The sequence spans 360 residues: Photosystem II protein D1 (360 aa).

Topologically, residues 1-28 (MTTTLQRRESANLWERFCNWVTSTDNRL) are cytoplasmic. The helical transmembrane segment at 29–46 (YVGWFGVIMIPTLLAATI) threads the bilayer. Over 47–117 (CFVIAFIAAP…NGGPYQLIIF (71 aa)) the chain is Lumenal. Position 118 (histidine 118) interacts with chlorophyll a. The helical transmembrane segment at 118 to 133 (HFLLGASCYMGRQWEL) threads the bilayer. 2 residues coordinate pheophytin a: tyrosine 126 and glutamine 130. The Cytoplasmic portion of the chain corresponds to 134–141 (SYRLGMRP). The chain crosses the membrane as a helical span at residues 142-156 (WICVAYSAPLASAFA). Residue tyrosine 147 coordinates pheophytin a. The Lumenal segment spans residues 157-196 (VFLIYPIGQGSFSDGMPLGISGTFNFMIVFQAEHNILMHP). 2 residues coordinate [CaMn4O5] cluster: aspartate 170 and glutamate 189. Residues 197-218 (FHQLGVAGVFGGALFCAMHGSL) traverse the membrane as a helical segment. Histidine 198 serves as a coordination point for chlorophyll a. Position 214 (methionine 214) interacts with pheophytin a. A quinone is bound by residues histidine 215 and 264-265 (SF). Histidine 215 is a binding site for Fe cation. Residues 219 to 273 (VTSSLIRETTETESANYGYKFGQEEETYNIVAAHGYFGRLIFQYASFNNSRSLHF) lie on the Cytoplasmic side of the membrane. Histidine 272 is a Fe cation binding site. The helical transmembrane segment at 274–288 (FLAAWRVVGVWFAAL) threads the bilayer. Topologically, residues 289–360 (GISTMAFNLN…VAMIAPSING (72 aa)) are lumenal. Histidine 332, glutamate 333, aspartate 342, and alanine 344 together coordinate [CaMn4O5] cluster. A propeptide spanning residues 345 to 360 (SAESAPVAMIAPSING) is cleaved from the precursor.

The protein belongs to the reaction center PufL/M/PsbA/D family. As to quaternary structure, PSII is composed of 1 copy each of membrane proteins PsbA, PsbB, PsbC, PsbD, PsbE, PsbF, PsbH, PsbI, PsbJ, PsbK, PsbL, PsbM, PsbT, PsbX, PsbY, PsbZ, Psb30/Ycf12, peripheral proteins PsbO, CyanoQ (PsbQ), PsbU, PsbV and a large number of cofactors. It forms dimeric complexes. It depends on The D1/D2 heterodimer binds P680, chlorophylls that are the primary electron donor of PSII, and subsequent electron acceptors. It shares a non-heme iron and each subunit binds pheophytin, quinone, additional chlorophylls, carotenoids and lipids. D1 provides most of the ligands for the Mn4-Ca-O5 cluster of the oxygen-evolving complex (OEC). There is also a Cl(-1) ion associated with D1 and D2, which is required for oxygen evolution. The PSII complex binds additional chlorophylls, carotenoids and specific lipids. as a cofactor. Post-translationally, C-terminally processed by CtpA; processing is essential to allow assembly of the oxygen-evolving complex and thus photosynthetic growth. In terms of processing, tyr-161 forms a radical intermediate that is referred to as redox-active TyrZ, YZ or Y-Z.

It is found in the cellular thylakoid membrane. It carries out the reaction 2 a plastoquinone + 4 hnu + 2 H2O = 2 a plastoquinol + O2. Functionally, photosystem II (PSII) is a light-driven water:plastoquinone oxidoreductase that uses light energy to abstract electrons from H(2)O, generating O(2) and a proton gradient subsequently used for ATP formation. It consists of a core antenna complex that captures photons, and an electron transfer chain that converts photonic excitation into a charge separation. The D1/D2 (PsbA/PsbD) reaction center heterodimer binds P680, the primary electron donor of PSII as well as several subsequent electron acceptors. This chain is Photosystem II protein D1, found in Thermostichus vulcanus (Synechococcus vulcanus).